Here is a 267-residue protein sequence, read N- to C-terminus: Hydroxyethylthiazole kinase (267 aa).

M46 serves as a coordination point for substrate. R122 and T168 together coordinate ATP. G195 serves as a coordination point for substrate.

This sequence belongs to the Thz kinase family. Mg(2+) serves as cofactor.

The enzyme catalyses 5-(2-hydroxyethyl)-4-methylthiazole + ATP = 4-methyl-5-(2-phosphooxyethyl)-thiazole + ADP + H(+). The protein operates within cofactor biosynthesis; thiamine diphosphate biosynthesis; 4-methyl-5-(2-phosphoethyl)-thiazole from 5-(2-hydroxyethyl)-4-methylthiazole: step 1/1. In terms of biological role, catalyzes the phosphorylation of the hydroxyl group of 4-methyl-5-beta-hydroxyethylthiazole (THZ). In Moorella thermoacetica (strain ATCC 39073 / JCM 9320), this protein is Hydroxyethylthiazole kinase.